The following is a 191-amino-acid chain: C-type lectin domain family 2 member D (191 aa).

Residues 1-38 (MHDSNNVEKDITPSELPANPGCLHSKEHSIKATLIWRL) are Cytoplasmic-facing. The chain crosses the membrane as a helical; Signal-anchor for type II membrane protein span at residues 39–59 (FFLIMFLTIIVCGMVAALSAI). The Extracellular portion of the chain corresponds to 60 to 191 (RANCHQEPSV…WICSKSDIHV (132 aa)). An intrachain disulfide couples cysteine 75 to cysteine 86. Residues 82-185 (FQRKCFYFSD…HYTERKWICS (104 aa)) enclose the C-type lectin domain. N-linked (GlcNAc...) asparagine glycosylation is found at asparagine 95 and asparagine 147. A disulfide bond links cysteine 103 and cysteine 184.

Homodimer; disulfide-linked. N-glycosylated. Detected in peripheral blood leukocytes, osteoblasts, lymph node, thymus and spleen. Isoform 1, isoform 2 and isoform 4 are expressed in T- and B-lymphocytes, and at lower levels in NK cells. They are also expressed in B-cell lines and LPS-matured monocyte-derived dendritic cells.

It is found in the cell membrane. The protein resides in the endoplasmic reticulum. Functionally, receptor for KLRB1 that protects target cells against natural killer cell-mediated lysis. Inhibits osteoclast formation. Inhibits bone resorption. Modulates the release of interferon-gamma. Binds high molecular weight sulfated glycosaminoglycans. This is C-type lectin domain family 2 member D (CLEC2D) from Homo sapiens (Human).